The chain runs to 889 residues: Coatomer subunit gamma-2 (889 aa).

5 HEAT repeats span residues 67–102, 103–140, 289–326, 328–360, and 361–398; these read VEAT…SPSA, DEVI…STLL, RELT…THPL, VTNC…TGNE, and SSVD…KFPL. The interval 596–617 is disordered; the sequence is PLAEKKTTGKKPTGPASALSGP.

It belongs to the COPG family. As to quaternary structure, oligomeric complex that consists of at least the alpha, beta, beta', gamma, delta, epsilon and zeta subunits.

The protein resides in the cytoplasm. It is found in the golgi apparatus membrane. Its subcellular location is the cytoplasmic vesicle. The protein localises to the COPI-coated vesicle membrane. In terms of biological role, the coatomer is a cytosolic protein complex that binds to dilysine motifs and reversibly associates with Golgi non-clathrin-coated vesicles, which further mediate biosynthetic protein transport from the ER, via the Golgi up to the trans Golgi network. Coatomer complex is required for budding from Golgi membranes, and is essential for the retrograde Golgi-to-ER transport of dilysine-tagged proteins. This Oryza sativa subsp. japonica (Rice) protein is Coatomer subunit gamma-2.